A 250-amino-acid chain; its full sequence is MSTLLEKTRKVNRILQKTGIQPVDFNEMASILKDVIEANVYILSRKGKVLGYSILKDYGNDIFAQSKIIPEEYNDKLLRVTETLANDKGNLFKEDKILSDLILTIVPVNGGGDRLGTLVLSRGVKEFTDDDLILAEYGATVVGLEILRSKNEEIEDEARKRAVVQMALGTLSYSELEAIKNIFEELNGKEGLLVASKIADKVGITRSVIVNALRKFESAGIIESRSLGMKGTHIRVLNDKLLEELEKMKR.

Residues 1–147 form a GAF domain region; it reads MSTLLEKTRK…GATVVGLEIL (147 aa). A DNA-binding region (H-T-H motif) is located at residues 195-214; it reads ASKIADKVGITRSVIVNALR.

Belongs to the CodY family.

It is found in the cytoplasm. DNA-binding global transcriptional regulator which is involved in the adaptive response to starvation and acts by directly or indirectly controlling the expression of numerous genes in response to nutrient availability. During rapid exponential growth, CodY is highly active and represses genes whose products allow adaptation to nutrient depletion. The sequence is that of Global transcriptional regulator CodY from Thermoanaerobacter sp. (strain X514).